The primary structure comprises 290 residues: 4-diphosphocytidyl-2-C-methyl-D-erythritol kinase (290 aa).

The active site involves Lys-10. 95 to 105 (PVAAGLAGGSS) provides a ligand contact to ATP. The active site involves Asp-137.

It belongs to the GHMP kinase family. IspE subfamily.

It carries out the reaction 4-CDP-2-C-methyl-D-erythritol + ATP = 4-CDP-2-C-methyl-D-erythritol 2-phosphate + ADP + H(+). The protein operates within isoprenoid biosynthesis; isopentenyl diphosphate biosynthesis via DXP pathway; isopentenyl diphosphate from 1-deoxy-D-xylulose 5-phosphate: step 3/6. In terms of biological role, catalyzes the phosphorylation of the position 2 hydroxy group of 4-diphosphocytidyl-2C-methyl-D-erythritol. The chain is 4-diphosphocytidyl-2-C-methyl-D-erythritol kinase from Geobacillus kaustophilus (strain HTA426).